A 195-amino-acid polypeptide reads, in one-letter code: Imidazoleglycerol-phosphate dehydratase (195 aa).

Belongs to the imidazoleglycerol-phosphate dehydratase family.

The protein resides in the cytoplasm. The catalysed reaction is D-erythro-1-(imidazol-4-yl)glycerol 3-phosphate = 3-(imidazol-4-yl)-2-oxopropyl phosphate + H2O. It functions in the pathway amino-acid biosynthesis; L-histidine biosynthesis; L-histidine from 5-phospho-alpha-D-ribose 1-diphosphate: step 6/9. This chain is Imidazoleglycerol-phosphate dehydratase, found in Geobacillus sp. (strain WCH70).